The primary structure comprises 1062 residues: Carbamoyl phosphate synthase large chain (1062 aa).

The carboxyphosphate synthetic domain stretch occupies residues 1–401; that stretch reads MPKRTDIHKI…AMQKAVQSLE (401 aa). Residues R129, R169, G175, G176, K208, I210, E215, G241, I242, H243, Q284, and E298 each coordinate ATP. The ATP-grasp 1 domain maps to 133–327; sequence KELCQKLGEP…IAKMAAKIAI (195 aa). Positions 284, 298, and 300 each coordinate Mg(2+). Mn(2+) is bound by residues Q284, E298, and N300. The segment at 402-546 is oligomerization domain; it reads IDEKDLYSAK…YSTYDGENES (145 aa). The carbamoyl phosphate synthetic domain stretch occupies residues 547 to 929; sequence RKSGKKSVIV…ALYKAFAGAK (383 aa). Positions 671–861 constitute an ATP-grasp 2 domain; it reads DQIIKSLHLH…MAQVATRVIM (191 aa). The ATP site is built by R707, D746, L748, E752, G777, V778, H779, S780, Q820, and E832. Residues Q820, E832, and N834 each coordinate Mg(2+). Residues Q820, E832, and N834 each coordinate Mn(2+). Positions 930-1062 constitute an MGS-like domain; it reads MQLPENGNVL…NRSFATDALK (133 aa). The tract at residues 930–1062 is allosteric domain; the sequence is MQLPENGNVL…NRSFATDALK (133 aa).

Belongs to the CarB family. In terms of assembly, composed of two chains; the small (or glutamine) chain promotes the hydrolysis of glutamine to ammonia, which is used by the large (or ammonia) chain to synthesize carbamoyl phosphate. Tetramer of heterodimers (alpha,beta)4. Mg(2+) is required as a cofactor. The cofactor is Mn(2+).

The catalysed reaction is hydrogencarbonate + L-glutamine + 2 ATP + H2O = carbamoyl phosphate + L-glutamate + 2 ADP + phosphate + 2 H(+). It carries out the reaction hydrogencarbonate + NH4(+) + 2 ATP = carbamoyl phosphate + 2 ADP + phosphate + 2 H(+). The protein operates within amino-acid biosynthesis; L-arginine biosynthesis; carbamoyl phosphate from bicarbonate: step 1/1. It functions in the pathway pyrimidine metabolism; UMP biosynthesis via de novo pathway; (S)-dihydroorotate from bicarbonate: step 1/3. Functionally, large subunit of the glutamine-dependent carbamoyl phosphate synthetase (CPSase). CPSase catalyzes the formation of carbamoyl phosphate from the ammonia moiety of glutamine, carbonate, and phosphate donated by ATP, constituting the first step of 2 biosynthetic pathways, one leading to arginine and/or urea and the other to pyrimidine nucleotides. The large subunit (synthetase) binds the substrates ammonia (free or transferred from glutamine from the small subunit), hydrogencarbonate and ATP and carries out an ATP-coupled ligase reaction, activating hydrogencarbonate by forming carboxy phosphate which reacts with ammonia to form carbamoyl phosphate. This chain is Carbamoyl phosphate synthase large chain, found in Lactobacillus delbrueckii subsp. bulgaricus (strain ATCC BAA-365 / Lb-18).